Reading from the N-terminus, the 226-residue chain is Ribosomal RNA large subunit methyltransferase E (226 aa).

The disordered stretch occupies residues 1 to 25 (MVKPPAGGNEGGRGKPARLKTAYGR). The S-adenosyl-L-methionine site is built by G82, W84, D100, D116, and D140. The Proton acceptor role is filled by K180.

It belongs to the class I-like SAM-binding methyltransferase superfamily. RNA methyltransferase RlmE family.

It localises to the cytoplasm. The catalysed reaction is uridine(2552) in 23S rRNA + S-adenosyl-L-methionine = 2'-O-methyluridine(2552) in 23S rRNA + S-adenosyl-L-homocysteine + H(+). Its function is as follows. Specifically methylates the uridine in position 2552 of 23S rRNA at the 2'-O position of the ribose in the fully assembled 50S ribosomal subunit. This is Ribosomal RNA large subunit methyltransferase E from Caulobacter vibrioides (strain ATCC 19089 / CIP 103742 / CB 15) (Caulobacter crescentus).